We begin with the raw amino-acid sequence, 515 residues long: Putative ribose/galactose/methyl galactoside import ATP-binding protein (515 aa).

ABC transporter domains lie at 25 to 261 (LEVL…VGRE) and 268 to 515 (LREK…SGLN). 57–64 (GENGAGKS) provides a ligand contact to ATP.

Belongs to the ABC transporter superfamily. Carbohydrate importer 2 (CUT2) (TC 3.A.1.2) family.

The protein localises to the cell inner membrane. The catalysed reaction is D-ribose(out) + ATP + H2O = D-ribose(in) + ADP + phosphate + H(+). It carries out the reaction D-galactose(out) + ATP + H2O = D-galactose(in) + ADP + phosphate + H(+). In terms of biological role, part of an ABC transporter complex involved in carbohydrate import. Could be involved in ribose, galactose and/or methyl galactoside import. Responsible for energy coupling to the transport system. This Pseudomonas fluorescens (strain ATCC BAA-477 / NRRL B-23932 / Pf-5) protein is Putative ribose/galactose/methyl galactoside import ATP-binding protein.